A 226-amino-acid chain; its full sequence is Protein B (226 aa).

Residues aspartate 37–valine 100 are igG constant region-binding. Repeats lie at residues threonine 158–asparagine 168, threonine 169–asparagine 179, and valine 180–asparagine 190.

It localises to the secreted. Functionally, protein B belongs to the group of bacterial Fc-binding protein. The chain is Protein B from Streptococcus agalactiae.